Here is a 431-residue protein sequence, read N- to C-terminus: MFKTISNFMRVKDIRNKIIFTLLMLIVFRLGSFIPVPHVNTEVLKAQDQMSVFGILNTFGGGALFNFSILAMGIMPYITASIIIQLLQMDVVPKFTEWSKQGEVGRRKLAQFTRYFTIVLGFIQALGMSYGFNNMAGGALITDPGVGTYLLIAIVLTAGTAFLMWLGEQITSHGVGNGISIIIFAGIVAGIPQTINQIYAQQFVDAGDQLFLQIIKVVVILVAILAIVVGVIFIQQAVRKISIQYAKGSGRSPVPGGQSTHLPLKVNPAGVIPVIFAVAFITTPRTVATFFGSNDVTNWIQKTFDYTHPVGMGVYAALIIAFTYFYAFVQVNPEQMADNLKKQGGYIPGVRPGKMTQDRITSILYRLTFVGSIFLAVIAILPVLFVNIAGLPSSAQIGGTSLLIVIGVALETMKQLESQLVKRNYRGFMKH.

10 consecutive transmembrane segments (helical) span residues 18 to 38 (IIFT…PVPH), 64 to 84 (LFNF…SIII), 116 to 136 (FTIV…NNMA), 146 to 166 (VGTY…LMWL), 175 to 195 (VGNG…PQTI), 214 to 234 (IIKV…VIFI), 262 to 282 (LPLK…AFIT), 309 to 329 (PVGM…YAFV), 369 to 389 (FVGS…VNIA), and 390 to 410 (GLPS…GVAL).

This sequence belongs to the SecY/SEC61-alpha family. As to quaternary structure, component of the Sec protein translocase complex. Heterotrimer consisting of SecY, SecE and SecG subunits. The heterotrimers can form oligomers, although 1 heterotrimer is thought to be able to translocate proteins. Interacts with the ribosome. Interacts with SecDF, and other proteins may be involved. Interacts with SecA.

Its subcellular location is the cell membrane. Its function is as follows. The central subunit of the protein translocation channel SecYEG. Consists of two halves formed by TMs 1-5 and 6-10. These two domains form a lateral gate at the front which open onto the bilayer between TMs 2 and 7, and are clamped together by SecE at the back. The channel is closed by both a pore ring composed of hydrophobic SecY resides and a short helix (helix 2A) on the extracellular side of the membrane which forms a plug. The plug probably moves laterally to allow the channel to open. The ring and the pore may move independently. This is Protein translocase subunit SecY from Bacillus licheniformis (strain ATCC 14580 / DSM 13 / JCM 2505 / CCUG 7422 / NBRC 12200 / NCIMB 9375 / NCTC 10341 / NRRL NRS-1264 / Gibson 46).